The following is a 343-amino-acid chain: GTPase Obg (343 aa).

The region spanning 1–159 (MQFIDHATIC…RQLRLELKLL (159 aa)) is the Obg domain. In terms of domain architecture, OBG-type G spans 160-328 (AEVGLIGLPN…LLRLVWQWLD (169 aa)). Residues 166–173 (GLPNAGKS), 191–195 (FTTLV), 213–216 (DIPG), 280–283 (NKID), and 309–311 (SSA) each bind GTP. Mg(2+) contacts are provided by Ser173 and Thr193.

It belongs to the TRAFAC class OBG-HflX-like GTPase superfamily. OBG GTPase family. As to quaternary structure, monomer. It depends on Mg(2+) as a cofactor.

The protein resides in the cytoplasm. Its function is as follows. An essential GTPase which binds GTP, GDP and possibly (p)ppGpp with moderate affinity, with high nucleotide exchange rates and a fairly low GTP hydrolysis rate. Plays a role in control of the cell cycle, stress response, ribosome biogenesis and in those bacteria that undergo differentiation, in morphogenesis control. The protein is GTPase Obg of Synechococcus elongatus (strain ATCC 33912 / PCC 7942 / FACHB-805) (Anacystis nidulans R2).